Reading from the N-terminus, the 317-residue chain is Methionyl-tRNA formyltransferase (317 aa).

112-115 lines the (6S)-5,6,7,8-tetrahydrofolate pocket; the sequence is SLLP.

Belongs to the Fmt family.

It catalyses the reaction L-methionyl-tRNA(fMet) + (6R)-10-formyltetrahydrofolate = N-formyl-L-methionyl-tRNA(fMet) + (6S)-5,6,7,8-tetrahydrofolate + H(+). Its function is as follows. Attaches a formyl group to the free amino group of methionyl-tRNA(fMet). The formyl group appears to play a dual role in the initiator identity of N-formylmethionyl-tRNA by promoting its recognition by IF2 and preventing the misappropriation of this tRNA by the elongation apparatus. The sequence is that of Methionyl-tRNA formyltransferase from Histophilus somni (strain 129Pt) (Haemophilus somnus).